A 76-amino-acid polypeptide reads, in one-letter code: Large ribosomal subunit protein bL31 (76 aa).

Cysteine 16, cysteine 18, cysteine 37, and cysteine 40 together coordinate Zn(2+).

It belongs to the bacterial ribosomal protein bL31 family. Type A subfamily. As to quaternary structure, part of the 50S ribosomal subunit. The cofactor is Zn(2+).

Binds the 23S rRNA. This Maridesulfovibrio salexigens (strain ATCC 14822 / DSM 2638 / NCIMB 8403 / VKM B-1763) (Desulfovibrio salexigens) protein is Large ribosomal subunit protein bL31.